The chain runs to 317 residues: Anamorsin homolog (317 aa).

An N-terminal SAM-like domain region spans residues 1-192 (MREVLVVSES…ITGVRPNWKA (192 aa)). A linker region spans residues 193 to 216 (KGDRKSSSIHAAPIDGYISKAPDY). Cys-219, Cys-226, Cys-229, and Cys-231 together coordinate [2Fe-2S] cluster. The fe-S binding site A stretch occupies residues 219-231 (CSTKPRACANCTC). [4Fe-4S] cluster-binding residues include Cys-286, Cys-289, Cys-297, and Cys-300. 2 short sequence motifs (cx2C motif) span residues 286–289 (CGNC) and 297–300 (CDSC). The fe-S binding site B stretch occupies residues 286–300 (CGNCYLGDAFRCDSC).

This sequence belongs to the anamorsin family. As to quaternary structure, monomer. The cofactor is [2Fe-2S] cluster. Requires [4Fe-4S] cluster as cofactor.

Its subcellular location is the cytoplasm. It is found in the mitochondrion intermembrane space. In terms of biological role, component of the cytosolic iron-sulfur (Fe-S) protein assembly (CIA) machinery. Required for the maturation of extramitochondrial Fe-S proteins. Part of an electron transfer chain functioning in an early step of cytosolic Fe-S biogenesis, facilitating the de novo assembly of a [4Fe-4S] cluster on the cytosolic Fe-S scaffold complex. Electrons are transferred from NADPH via a FAD- and FMN-containing diflavin oxidoreductase. Together with the diflavin oxidoreductase, also required for the assembly of the diferric tyrosyl radical cofactor of ribonucleotide reductase (RNR), probably by providing electrons for reduction during radical cofactor maturation in the catalytic small subunit. The protein is Anamorsin homolog of Theileria parva (East coast fever infection agent).